The following is a 291-amino-acid chain: Taste receptor type 2 member 16 (291 aa).

A topological domain (extracellular) is located at residue methionine 1. A helical transmembrane segment spans residues 2–22 (IPIQLTVFFMIIYVLESLTII). At 23–41 (VQSSLIVAVLGREWLQVRR) the chain is on the cytoplasmic side. Residues 42–62 (LMPVDMILISLGISRFCLQWA) traverse the membrane as a helical segment. The Extracellular segment spans residues 63–84 (SMLNNFCSYLNLNYVLCNLTIT). An N-linked (GlcNAc...) asparagine glycan is attached at asparagine 80. A helical transmembrane segment spans residues 85–105 (WEFFNILTFWLNSLLTVFYCI). Residues 106 to 125 (KVSSFTHHIFLWVRWRILRW) are Cytoplasmic-facing. A helical transmembrane segment spans residues 126 to 146 (FPWILLGSLTIACVTIIPSAI). At 147–182 (GNYIQIQLLTMEHLPRNSTVTDRLEKFHQYQFQSHT) the chain is on the extracellular side. Residue asparagine 163 is glycosylated (N-linked (GlcNAc...) asparagine). Residues 183–203 (VALVIPFILFLASTILLMASL) form a helical membrane-spanning segment. The Cytoplasmic segment spans residues 204–228 (TKQIQHHSTGHCNPSMKAHFTALRS). The helical transmembrane segment at 229-249 (LAILFIVFTSYFLIILITIIG) threads the bilayer. Residues 250–257 (TLFDKRCW) are Extracellular-facing. A helical transmembrane segment spans residues 258 to 278 (LWVWEAFVYAFILMHSTSLML). Residues 279-291 (SSPTLKRILKGKC) lie on the Cytoplasmic side of the membrane.

This sequence belongs to the G-protein coupled receptor T2R family. As to quaternary structure, interacts with RTP3 and RTP4.

The protein localises to the cell membrane. Receptor that may play a role in the perception of bitterness and is gustducin-linked. May function as a bitter taste receptor for the phytonutrient beta glucopyranosides, some of which are toxic and some of which lower the risk of cancer and cardiovascular disease. The activity of this receptor may stimulate alpha gustducin, mediate PLC-beta-2 activation and lead to the gating of TRPM5. The sequence is that of Taste receptor type 2 member 16 (TAS2R16) from Pongo pygmaeus (Bornean orangutan).